The chain runs to 438 residues: sn-glycerol-3-phosphate-binding periplasmic protein UgpB (438 aa).

The first 23 residues, 1-23, serve as a signal peptide directing secretion; sequence MISLRHTALGLALSLAFTGQALA. Residues Tyr65, Glu89, Ser144, Ser270, Gly307, Tyr346, and Arg397 each contribute to the sn-glycerol 3-phosphate site.

The protein belongs to the bacterial solute-binding protein 1 family. As to quaternary structure, the complex is composed of two ATP-binding proteins (UgpC), two transmembrane proteins (UgpA and UgpE) and a solute-binding protein (UgpB).

Its subcellular location is the periplasm. Functionally, part of the ABC transporter complex UgpBAEC involved in sn-glycerol-3-phosphate (G3P) import. Binds G3P. This Salmonella paratyphi A (strain ATCC 9150 / SARB42) protein is sn-glycerol-3-phosphate-binding periplasmic protein UgpB (ugpB).